The primary structure comprises 426 residues: Glutamate-1-semialdehyde 2,1-aminomutase (426 aa).

An N6-(pyridoxal phosphate)lysine modification is found at K265.

This sequence belongs to the class-III pyridoxal-phosphate-dependent aminotransferase family. HemL subfamily. As to quaternary structure, homodimer. Requires pyridoxal 5'-phosphate as cofactor.

The protein resides in the cytoplasm. It catalyses the reaction (S)-4-amino-5-oxopentanoate = 5-aminolevulinate. Its pathway is porphyrin-containing compound metabolism; protoporphyrin-IX biosynthesis; 5-aminolevulinate from L-glutamyl-tRNA(Glu): step 2/2. This Actinobacillus pleuropneumoniae serotype 5b (strain L20) protein is Glutamate-1-semialdehyde 2,1-aminomutase.